Reading from the N-terminus, the 775-residue chain is Chitin synthase 6 (775 aa).

Helical transmembrane passes span 19–39 (VLLM…YCLV), 54–74 (CIIV…IMVV), 94–114 (LQWF…LFCI), 441–461 (FMQN…LAIM), 470–490 (LPVG…LYFG), and 498–518 (IWLY…YMVY). The segment covering 532–541 (RADAAAADSH) has biased composition (low complexity). Disordered regions lie at residues 532–603 (RADA…DGKF) and 702–775 (PSAF…KTSR). Residues 542 to 556 (TTAREAAEQAEKQGD) show a composition bias toward basic and acidic residues. Residues 577–586 (NRESTTTSEL) are compositionally biased toward polar residues. Low complexity predominate over residues 702-713 (PSAFPHAHSASA). An N-linked (GlcNAc...) asparagine glycan is attached at Asn724. Residues 732-741 (RSEDIQRFSE) are compositionally biased toward basic and acidic residues. Positions 754-763 (SRNVGNSSFA) are enriched in polar residues. Asn759 carries N-linked (GlcNAc...) asparagine glycosylation. A compositionally biased stretch (basic residues) spans 766 to 775 (MAKRTPKTSR).

Belongs to the chitin synthase family. Class VII subfamily.

It is found in the cell membrane. It catalyses the reaction [(1-&gt;4)-N-acetyl-beta-D-glucosaminyl](n) + UDP-N-acetyl-alpha-D-glucosamine = [(1-&gt;4)-N-acetyl-beta-D-glucosaminyl](n+1) + UDP + H(+). Functionally, polymerizes chitin, a structural polymer of the cell wall and septum, by transferring the sugar moiety of UDP-GlcNAc to the non-reducing end of the growing chitin polymer. Shows additive effects in septum formation with CHS1, CHS2, CHS3A, CHS4, CHS5 and CHS7. Involved in virulence and mediates mycotoxin deoxinivalenol (DON) biosynthesis via the regulation of the expression of TRI4, TRI5 and TRI6. The sequence is that of Chitin synthase 6 from Gibberella zeae (strain ATCC MYA-4620 / CBS 123657 / FGSC 9075 / NRRL 31084 / PH-1) (Wheat head blight fungus).